The following is a 95-amino-acid chain: MALERSDVEKIAHLASIKLNEGDLPHITSALNSILGLVDEMQAVDTDGIEPLAHPLEASQRLRADVVTESNHREAYQSIAPAVESGLYLVPKVID.

This sequence belongs to the GatC family. As to quaternary structure, heterotrimer of A, B and C subunits.

The catalysed reaction is L-glutamyl-tRNA(Gln) + L-glutamine + ATP + H2O = L-glutaminyl-tRNA(Gln) + L-glutamate + ADP + phosphate + H(+). It catalyses the reaction L-aspartyl-tRNA(Asn) + L-glutamine + ATP + H2O = L-asparaginyl-tRNA(Asn) + L-glutamate + ADP + phosphate + 2 H(+). Its function is as follows. Allows the formation of correctly charged Asn-tRNA(Asn) or Gln-tRNA(Gln) through the transamidation of misacylated Asp-tRNA(Asn) or Glu-tRNA(Gln) in organisms which lack either or both of asparaginyl-tRNA or glutaminyl-tRNA synthetases. The reaction takes place in the presence of glutamine and ATP through an activated phospho-Asp-tRNA(Asn) or phospho-Glu-tRNA(Gln). The protein is Aspartyl/glutamyl-tRNA(Asn/Gln) amidotransferase subunit C of Pseudomonas fluorescens (strain ATCC BAA-477 / NRRL B-23932 / Pf-5).